We begin with the raw amino-acid sequence, 702 residues long: Ribosomal RNA large subunit methyltransferase K/L (702 aa).

The region spanning Leu-43 to Leu-154 is the THUMP domain.

Belongs to the methyltransferase superfamily. RlmKL family.

It is found in the cytoplasm. It catalyses the reaction guanosine(2445) in 23S rRNA + S-adenosyl-L-methionine = N(2)-methylguanosine(2445) in 23S rRNA + S-adenosyl-L-homocysteine + H(+). The catalysed reaction is guanosine(2069) in 23S rRNA + S-adenosyl-L-methionine = N(2)-methylguanosine(2069) in 23S rRNA + S-adenosyl-L-homocysteine + H(+). Functionally, specifically methylates the guanine in position 2445 (m2G2445) and the guanine in position 2069 (m7G2069) of 23S rRNA. The chain is Ribosomal RNA large subunit methyltransferase K/L from Salmonella typhi.